The sequence spans 93 residues: YcgL domain-containing protein KPK_1976 (93 aa).

The 85-residue stretch at 1 to 85 (MFCVIYRSTK…PSENLLKKHL (85 aa)) folds into the YcgL domain.

The chain is YcgL domain-containing protein KPK_1976 from Klebsiella pneumoniae (strain 342).